A 123-amino-acid chain; its full sequence is Crossover junction endodeoxyribonuclease Hjc (123 aa).

Glu9 is a binding site for Mg(2+). Ser29 is an active-site residue. Positions 33 and 46 each coordinate Mg(2+).

It belongs to the Holliday junction resolvase Hjc family. Homodimer. Probably interacts with PCNA and RadB. It depends on Mg(2+) as a cofactor. The cofactor is Mn(2+).

The catalysed reaction is Endonucleolytic cleavage at a junction such as a reciprocal single-stranded crossover between two homologous DNA duplexes (Holliday junction).. With respect to regulation, cleavage inhibited by RadB in the absence (but not presence) of ATP. A structure-specific endonuclease that resolves Holliday junction (HJ) intermediates during genetic recombination. Cleaves 4-way DNA junctions introducing paired nicks in opposing strands, leaving a 5'-terminal phosphate and a 3'-terminal hydroxyl group that are subsequently ligated to produce recombinant products. Cleaves both mobile and immobile junctions. Binds 4-way junction DNA, a synthetic Hj, binding is not competed by dsDNA. The chain is Crossover junction endodeoxyribonuclease Hjc from Pyrococcus furiosus (strain ATCC 43587 / DSM 3638 / JCM 8422 / Vc1).